The primary structure comprises 112 residues: Nitrogen regulatory protein GlnK2 (112 aa).

Residues threonine 29, glutamine 38–glutamine 39, valine 64, and glycine 87–lysine 90 contribute to the ADP site. Residues threonine 29, glutamine 38–glutamine 39, valine 64, glycine 87–lysine 90, and arginine 101–arginine 103 each bind ATP.

The protein belongs to the P(II) protein family. Homotrimer. Interacts and forms a complex with Amt2.

It is found in the cytoplasm. With respect to regulation, binding of adenosine nucleotides results in distinct, cooperative behavior for ATP and ADP. GlnK2 is completely insensitive to 2-oxoglutarate at a low level of intracellular nitrogen. Functionally, involved in the regulation of nitrogen metabolism. Regulates the activity of its targets by protein-protein interaction in response to the nitrogen status of the cell. Regulates the activity of the ammonia channel Amt2 via direct interaction. The chain is Nitrogen regulatory protein GlnK2 from Archaeoglobus fulgidus (strain ATCC 49558 / DSM 4304 / JCM 9628 / NBRC 100126 / VC-16).